The sequence spans 281 residues: ATP phosphoribosyltransferase (281 aa).

Belongs to the ATP phosphoribosyltransferase family. Long subfamily. Mg(2+) serves as cofactor.

Its subcellular location is the cytoplasm. It carries out the reaction 1-(5-phospho-beta-D-ribosyl)-ATP + diphosphate = 5-phospho-alpha-D-ribose 1-diphosphate + ATP. The protein operates within amino-acid biosynthesis; L-histidine biosynthesis; L-histidine from 5-phospho-alpha-D-ribose 1-diphosphate: step 1/9. Feedback inhibited by histidine. In terms of biological role, catalyzes the condensation of ATP and 5-phosphoribose 1-diphosphate to form N'-(5'-phosphoribosyl)-ATP (PR-ATP). Has a crucial role in the pathway because the rate of histidine biosynthesis seems to be controlled primarily by regulation of HisG enzymatic activity. This Corynebacterium glutamicum (strain R) protein is ATP phosphoribosyltransferase.